The sequence spans 533 residues: MDATAFHPSLWGDFFVKYKPPTAPKRGHMTERAELLKEEVRKTLKAAANQIKNALDLIITLQRLGLDHHYENEISELLRFVYSSSDYDDKDLYVVSLRFYLLRKHGHCVSSDVFTSFKDEEGNFVVDDTKCLLSLYNAAYFRTHGEKVLDEAIAFTRRQLEASLLDPLEPALADEVHLTLQTPLFRRLRILEAINYIPIYGKEAGRNEAILELAKLNFNLAQLIYCGELKEVTLWWKQLNVETNLSFIRDRIVECHFWMTGACCEPQYSLSRVIATKMTALITVLDDMMDTYSTTEEAMLLAEAIYRWEENAAELLPGYMKDFYLYLLKTIDSCGDELGPNRSFRTFYLKEMLKVLVRGSSQEIKWRNENYVPKTISEHLEHSGPTVGAFQVACSSFVGMGDIITKESFEWLLTYPELVKSLMNIARLLNDTASTKREQNAGQHVSTVQCYMLKHGTTMDEACEKVKELTEDSWKDMMELYLTPTEHPKLIAQTIVDFARTADYMYKETDGFTFSHTIKDMIAKLFVDPISLF.

Positions 286, 290, 430, 434, and 438 each coordinate Mg(2+). The DDXXD motif signature appears at 286–290 (DDMMD).

This sequence belongs to the terpene synthase family. It depends on Mg(2+) as a cofactor. Co(2+) is required as a cofactor. The cofactor is Mn(2+).

The protein resides in the cytoplasm. The enzyme catalyses (2E,6E)-farnesyl diphosphate = (E)-beta-farnesene + diphosphate. The protein operates within secondary metabolite biosynthesis; terpenoid biosynthesis. Its function is as follows. Sesquiterpene cyclase catalyzing the production of beta-farnesene and alpha-bergamotene in equal amounts from farnesyl diphosphate. Involved in indirect defense by producing volatile signals attracting natural enemies of herbivores. The sequence is that of (E)-beta-farnesene synthase from Zea mays subsp. huehuetenangensis (San Antonio Huista teosinte).